A 224-amino-acid chain; its full sequence is 7-cyano-7-deazaguanine synthase (224 aa).

Residue 10-20 (VSGGLDSATVL) coordinates ATP. 4 residues coordinate Zn(2+): cysteine 189, cysteine 199, cysteine 202, and cysteine 205.

Belongs to the QueC family. Requires Zn(2+) as cofactor.

It catalyses the reaction 7-carboxy-7-deazaguanine + NH4(+) + ATP = 7-cyano-7-deazaguanine + ADP + phosphate + H2O + H(+). It participates in purine metabolism; 7-cyano-7-deazaguanine biosynthesis. Catalyzes the ATP-dependent conversion of 7-carboxy-7-deazaguanine (CDG) to 7-cyano-7-deazaguanine (preQ(0)). In Nitrosococcus oceani (strain ATCC 19707 / BCRC 17464 / JCM 30415 / NCIMB 11848 / C-107), this protein is 7-cyano-7-deazaguanine synthase.